We begin with the raw amino-acid sequence, 262 residues long: Expansin-A21 (262 aa).

The signal sequence occupies residues 1–29 (MKLLEKMTYVECFMIIMATWFMFISYSHG). Residues 64–169 (EGACGYGDLN…RRVPCAKTGG (106 aa)) enclose the Expansin-like EG45 domain. In terms of domain architecture, Expansin-like CBD spans 179–258 (NILTILPYNV…SWGFGQTFDG (80 aa)).

This sequence belongs to the expansin family. Expansin A subfamily.

Its subcellular location is the secreted. The protein localises to the cell wall. It localises to the membrane. Causes loosening and extension of plant cell walls by disrupting non-covalent bonding between cellulose microfibrils and matrix glucans. No enzymatic activity has been found. This is Expansin-A21 (EXPA21) from Arabidopsis thaliana (Mouse-ear cress).